The following is a 357-amino-acid chain: Peptide chain release factor 1 (357 aa).

Q235 bears the N5-methylglutamine mark. Residues 285-305 (KRHNEASAMRSAQVGSGDRSE) form a disordered region.

It belongs to the prokaryotic/mitochondrial release factor family. Post-translationally, methylated by PrmC. Methylation increases the termination efficiency of RF1.

It is found in the cytoplasm. Functionally, peptide chain release factor 1 directs the termination of translation in response to the peptide chain termination codons UAG and UAA. In Chlamydia pneumoniae (Chlamydophila pneumoniae), this protein is Peptide chain release factor 1 (prfA).